Here is a 211-residue protein sequence, read N- to C-terminus: Claudin-7 (211 aa).

The Cytoplasmic segment spans residues 1–7 (MANSGLQ). The helical transmembrane segment at 8–28 (LLGFSMALLGWVGLVACTAIP) threads the bilayer. Residues 29–81 (QWQMSSYAGDNIITAQAMYKGLWMDCVTQSTGMMSCKMYDSVLALSAALQATR) are Extracellular-facing. The chain crosses the membrane as a helical span at residues 82–102 (ALMVVSLVLGFLAMFVATMGM). Residues 103–117 (KCTRCGGDDKVKKAR) are Cytoplasmic-facing. A helical membrane pass occupies residues 118-138 (IAMGGGIIFIVAGLAALVACS). Residues 139–160 (WYGHQIVTDFYNPLIPTNIKYE) lie on the Extracellular side of the membrane. A helical membrane pass occupies residues 161-181 (FGPAIFIGWAGSALVILGGAL). At 182-211 (LSCSCPGNESKAGYRVPRSYPKSNSSKEYV) the chain is on the cytoplasmic side. An interactions with TJP1, TJP2 and TJP3 region spans residues 210–211 (YV).

Belongs to the claudin family. As to quaternary structure, directly interacts with TJP1/ZO-1, TJP2/ZO-2 and TJP3/ZO-3. The phosphorylated form interacts with EPCAM. Does not interact with CD81. In terms of processing, phosphorylated. As to expression, expressed in kidney, lung and prostate. Isoform 1 seems to be predominant, except in some normal prostate samples, where isoform 2 is the major form. Down-regulated in breast cancers, including ductal carcinoma in situ (DCIS), lobular carcinoma in situ (LCIS) and invasive ductal carcinoma (IDC) (at protein level), as well as in several cancer cell lines. Loss of expression correlates with histological grade, occurring predominantly in high-grade lesions.

It is found in the cell membrane. It localises to the basolateral cell membrane. The protein localises to the cell junction. The protein resides in the tight junction. In terms of biological role, plays a major role in tight junction-specific obliteration of the intercellular space. This Homo sapiens (Human) protein is Claudin-7 (CLDN7).